Reading from the N-terminus, the 319-residue chain is Acetyl-coenzyme A carboxylase carboxyl transferase subunit alpha (319 aa).

The CoA carboxyltransferase C-terminal domain occupies Asn-35–Asp-296.

The protein belongs to the AccA family. As to quaternary structure, acetyl-CoA carboxylase is a heterohexamer composed of biotin carboxyl carrier protein (AccB), biotin carboxylase (AccC) and two subunits each of ACCase subunit alpha (AccA) and ACCase subunit beta (AccD).

The protein resides in the cytoplasm. It carries out the reaction N(6)-carboxybiotinyl-L-lysyl-[protein] + acetyl-CoA = N(6)-biotinyl-L-lysyl-[protein] + malonyl-CoA. It functions in the pathway lipid metabolism; malonyl-CoA biosynthesis; malonyl-CoA from acetyl-CoA: step 1/1. Component of the acetyl coenzyme A carboxylase (ACC) complex. First, biotin carboxylase catalyzes the carboxylation of biotin on its carrier protein (BCCP) and then the CO(2) group is transferred by the carboxyltransferase to acetyl-CoA to form malonyl-CoA. The chain is Acetyl-coenzyme A carboxylase carboxyl transferase subunit alpha from Pectobacterium atrosepticum (strain SCRI 1043 / ATCC BAA-672) (Erwinia carotovora subsp. atroseptica).